We begin with the raw amino-acid sequence, 356 residues long: Chorismate synthase (356 aa).

Position 46 (Arg46) interacts with NADP(+). FMN is bound by residues 122-124 (RSS), 234-235 (NG), Gly274, 289-293 (KPTPS), and Arg315.

This sequence belongs to the chorismate synthase family. In terms of assembly, homotetramer. The cofactor is FMNH2.

It catalyses the reaction 5-O-(1-carboxyvinyl)-3-phosphoshikimate = chorismate + phosphate. It participates in metabolic intermediate biosynthesis; chorismate biosynthesis; chorismate from D-erythrose 4-phosphate and phosphoenolpyruvate: step 7/7. Functionally, catalyzes the anti-1,4-elimination of the C-3 phosphate and the C-6 proR hydrogen from 5-enolpyruvylshikimate-3-phosphate (EPSP) to yield chorismate, which is the branch point compound that serves as the starting substrate for the three terminal pathways of aromatic amino acid biosynthesis. This reaction introduces a second double bond into the aromatic ring system. The sequence is that of Chorismate synthase from Campylobacter fetus subsp. fetus (strain 82-40).